We begin with the raw amino-acid sequence, 375 residues long: uncharacterized protein (375 aa).

It belongs to the IMPDH/GMPR family.

This is an uncharacterized protein from Mycobacterium leprae (strain TN).